Reading from the N-terminus, the 494-residue chain is Guanosine-5'-triphosphate,3'-diphosphate pyrophosphatase (494 aa).

The protein belongs to the GppA/Ppx family. GppA subfamily.

The catalysed reaction is guanosine 3'-diphosphate 5'-triphosphate + H2O = guanosine 3',5'-bis(diphosphate) + phosphate + H(+). It functions in the pathway purine metabolism; ppGpp biosynthesis; ppGpp from GTP: step 2/2. In terms of biological role, catalyzes the conversion of pppGpp to ppGpp. Guanosine pentaphosphate (pppGpp) is a cytoplasmic signaling molecule which together with ppGpp controls the 'stringent response', an adaptive process that allows bacteria to respond to amino acid starvation, resulting in the coordinated regulation of numerous cellular activities. This Escherichia coli (strain 55989 / EAEC) protein is Guanosine-5'-triphosphate,3'-diphosphate pyrophosphatase.